A 92-amino-acid chain; its full sequence is Ribonuclease P protein component 1 (92 aa).

The protein belongs to the eukaryotic/archaeal RNase P protein component 1 family. In terms of assembly, consists of a catalytic RNA component and at least 4-5 protein subunits.

It is found in the cytoplasm. The enzyme catalyses Endonucleolytic cleavage of RNA, removing 5'-extranucleotides from tRNA precursor.. In terms of biological role, part of ribonuclease P, a protein complex that generates mature tRNA molecules by cleaving their 5'-ends. This is Ribonuclease P protein component 1 from Staphylothermus marinus (strain ATCC 43588 / DSM 3639 / JCM 9404 / F1).